A 621-amino-acid chain; its full sequence is Methionine--tRNA ligase (621 aa).

Positions 11 to 21 (PYANGPRHIGH) match the 'HIGH' region motif. Positions 143, 146, 156, and 159 each coordinate Zn(2+). Residues 347–351 (KFSSS) carry the 'KMSKS' region motif. S350 contacts ATP.

It belongs to the class-I aminoacyl-tRNA synthetase family. MetG type 1 subfamily. As to quaternary structure, monomer. It depends on Zn(2+) as a cofactor.

It localises to the cytoplasm. It carries out the reaction tRNA(Met) + L-methionine + ATP = L-methionyl-tRNA(Met) + AMP + diphosphate. In terms of biological role, is required not only for elongation of protein synthesis but also for the initiation of all mRNA translation through initiator tRNA(fMet) aminoacylation. This is Methionine--tRNA ligase from Bifidobacterium longum subsp. infantis (strain ATCC 15697 / DSM 20088 / JCM 1222 / NCTC 11817 / S12).